Here is a 325-residue protein sequence, read N- to C-terminus: MATH domain and coiled-coil domain-containing protein At3g58340 (325 aa).

The 126-residue stretch at 6-131 (DKKFCWEIKN…NGQVMIVAEV (126 aa)) folds into the MATH domain. A coiled-coil region spans residues 266-315 (KVDWLEKKLDHVKEKKEKEQSGLIILQGIEQQLHELMHKCEKKKSEVLSV).

The protein is MATH domain and coiled-coil domain-containing protein At3g58340 of Arabidopsis thaliana (Mouse-ear cress).